Here is a 382-residue protein sequence, read N- to C-terminus: Putative glutamate--cysteine ligase 2-1 (382 aa).

This sequence belongs to the glutamate--cysteine ligase type 2 family. YbdK subfamily.

The enzyme catalyses L-cysteine + L-glutamate + ATP = gamma-L-glutamyl-L-cysteine + ADP + phosphate + H(+). ATP-dependent carboxylate-amine ligase which exhibits weak glutamate--cysteine ligase activity. The polypeptide is Putative glutamate--cysteine ligase 2-1 (Frankia casuarinae (strain DSM 45818 / CECT 9043 / HFP020203 / CcI3)).